Reading from the N-terminus, the 556-residue chain is CDP-diacylglycerol--glycerol-3-phosphate 3-phosphatidyltransferase, mitochondrial (556 aa).

Residues 1-28 (MAVAAAAAAGPVFWRRLLGLLPGRPGLA) constitute a mitochondrion transit peptide. Residue Ser49 is modified to Phosphoserine. 124–131 (ASLYLGTG) contacts ATP. 2 PLD phosphodiesterase domains span residues 215-241 (TIGL…SDSY) and 460-493 (RGWT…GYRS). Catalysis depends on residues His220, Lys222, and Asp227.

This sequence belongs to the CDP-alcohol phosphatidyltransferase class-II family.

Its subcellular location is the mitochondrion. It carries out the reaction a CDP-1,2-diacyl-sn-glycerol + sn-glycerol 3-phosphate = a 1,2-diacyl-sn-glycero-3-phospho-(1'-sn-glycero-3'-phosphate) + CMP + H(+). It participates in phospholipid metabolism; phosphatidylglycerol biosynthesis; phosphatidylglycerol from CDP-diacylglycerol: step 1/2. Its activity is regulated as follows. Activated by calcium and magnesium and inhibited by other bivalent cations. Functions in the biosynthesis of the anionic phospholipids phosphatidylglycerol and cardiolipin. This chain is CDP-diacylglycerol--glycerol-3-phosphate 3-phosphatidyltransferase, mitochondrial (PGS1), found in Homo sapiens (Human).